A 321-amino-acid chain; its full sequence is tRNA U34 carboxymethyltransferase (321 aa).

Carboxy-S-adenosyl-L-methionine contacts are provided by residues Lys90, Trp104, Lys109, Gly129, 151–153, 180–181, Met195, Tyr199, and Arg314; these read DPT and IE.

This sequence belongs to the class I-like SAM-binding methyltransferase superfamily. CmoB family. In terms of assembly, homotetramer.

It carries out the reaction carboxy-S-adenosyl-L-methionine + 5-hydroxyuridine(34) in tRNA = 5-carboxymethoxyuridine(34) in tRNA + S-adenosyl-L-homocysteine + H(+). Catalyzes carboxymethyl transfer from carboxy-S-adenosyl-L-methionine (Cx-SAM) to 5-hydroxyuridine (ho5U) to form 5-carboxymethoxyuridine (cmo5U) at position 34 in tRNAs. In Mannheimia succiniciproducens (strain KCTC 0769BP / MBEL55E), this protein is tRNA U34 carboxymethyltransferase.